Here is a 254-residue protein sequence, read N- to C-terminus: tRNA (guanine-N(1)-)-methyltransferase (254 aa).

S-adenosyl-L-methionine contacts are provided by residues Gly-119 and 139–144 (IGDFVL).

Belongs to the RNA methyltransferase TrmD family. As to quaternary structure, homodimer.

The protein localises to the cytoplasm. The enzyme catalyses guanosine(37) in tRNA + S-adenosyl-L-methionine = N(1)-methylguanosine(37) in tRNA + S-adenosyl-L-homocysteine + H(+). Its function is as follows. Specifically methylates guanosine-37 in various tRNAs. The chain is tRNA (guanine-N(1)-)-methyltransferase from Dechloromonas aromatica (strain RCB).